The following is a 242-amino-acid chain: Terpene cyclase dpfgB (242 aa).

The next 7 helical transmembrane spans lie at 15 to 37 (DVAW…NYVG), 51 to 71 (ALMA…IYPF), 75 to 95 (LEMY…YTAV), 112 to 132 (LPLI…ALAA), 141 to 161 (AWSA…QLLC), 169 to 189 (SYFL…QDIL), and 205 to 225 (LYIW…ICLW).

This sequence belongs to the paxB family.

Its subcellular location is the membrane. Its pathway is secondary metabolite biosynthesis; terpenoid biosynthesis. In terms of biological role, terpene cyclase; part of the gene cluster that mediates the biosynthesis of diterpenoid pyrones. The first step of the pathway is the synthesis of the alpha-pyrone moiety by the polyketide synthase dpfgA via condensation of one acetyl-CoA starter unit with 3 malonyl-CoA units and 2 methylations. The alpha-pyrone is then combined with geranylgeranyl pyrophosphate (GGPP) formed by the GGPP synthase dpfgD through the action of the prenyltransferase dpfgC to yield a linear alpha-pyrone diterpenoid. Subsequent steps in the diterpenoid pyrone biosynthetic pathway involve the decalin core formation, which is initiated by the epoxidation of the C10-C11 olefin by the FAD-dependent oxidoreductase dpfgE, and is followed by a cyclization cascade catalyzed by the terpene cyclase dpfgB. The short chain dehydrogenase/reductase dpfgG then oxidizes the 8S hydroxy group to a ketone and the short chain dehydrogenase/reductase dpfgH reduces the ketone to the 8R hydroxy group to yield higginsianin B. Higginsianin B is further methylated by the methyltransferase dpfgI to produce the intermediate named FDDP B. The cytochrome P450 monooxygenase dfgpJ then catalyzes a three-step oxidation at C-27 to generate a carboxylic acid as well as C-26 hydroxylation. Finally, methyltransferase dpfgK methylates the carboxylic acid generated by dpfgJ, yielding the final diterpenoid pyrones from the pathway which were named FDDP D and FDDP E. The protein is Terpene cyclase dpfgB of Gibberella zeae (strain ATCC MYA-4620 / CBS 123657 / FGSC 9075 / NRRL 31084 / PH-1) (Wheat head blight fungus).